Reading from the N-terminus, the 217-residue chain is Large ribosomal subunit protein uL3 (217 aa).

The tract at residues 127 to 162 (GFSRGPMSHGSKNHRAPGSTGAGTTPGRIYPGKRMA) is disordered. Positions 142–153 (APGSTGAGTTPG) are enriched in low complexity.

The protein belongs to the universal ribosomal protein uL3 family. In terms of assembly, part of the 50S ribosomal subunit. Forms a cluster with proteins L14 and L19.

One of the primary rRNA binding proteins, it binds directly near the 3'-end of the 23S rRNA, where it nucleates assembly of the 50S subunit. This chain is Large ribosomal subunit protein uL3, found in Prochlorococcus marinus (strain MIT 9312).